The following is a 123-amino-acid chain: Peptide methionine sulfoxide reductase MsrA (123 aa).

C8 is an active-site residue.

The protein belongs to the MsrA Met sulfoxide reductase family.

It carries out the reaction L-methionyl-[protein] + [thioredoxin]-disulfide + H2O = L-methionyl-(S)-S-oxide-[protein] + [thioredoxin]-dithiol. The enzyme catalyses [thioredoxin]-disulfide + L-methionine + H2O = L-methionine (S)-S-oxide + [thioredoxin]-dithiol. Has an important function as a repair enzyme for proteins that have been inactivated by oxidation. Catalyzes the reversible oxidation-reduction of methionine sulfoxide in proteins to methionine. The protein is Peptide methionine sulfoxide reductase MsrA of Thermoactinomyces vulgaris.